Consider the following 75-residue polypeptide: Sec-independent protein translocase protein TatA (75 aa).

The chain crosses the membrane as a helical span at residues M1 to G21. Positions K41–R75 are disordered.

This sequence belongs to the TatA/E family. The Tat system comprises two distinct complexes: a TatABC complex, containing multiple copies of TatA, TatB and TatC subunits, and a separate TatA complex, containing only TatA subunits. Substrates initially bind to the TatABC complex, which probably triggers association of the separate TatA complex to form the active translocon.

The protein resides in the cell inner membrane. Its function is as follows. Part of the twin-arginine translocation (Tat) system that transports large folded proteins containing a characteristic twin-arginine motif in their signal peptide across membranes. TatA could form the protein-conducting channel of the Tat system. The sequence is that of Sec-independent protein translocase protein TatA from Xanthomonas axonopodis pv. citri (strain 306).